The chain runs to 154 residues: Crossover junction endodeoxyribonuclease RuvC (154 aa).

Active-site residues include D7, E67, and D139. Mg(2+)-binding residues include D7, E67, and D139.

The protein belongs to the RuvC family. In terms of assembly, homodimer which binds Holliday junction (HJ) DNA. The HJ becomes 2-fold symmetrical on binding to RuvC with unstacked arms; it has a different conformation from HJ DNA in complex with RuvA. In the full resolvosome a probable DNA-RuvA(4)-RuvB(12)-RuvC(2) complex forms which resolves the HJ. The cofactor is Mg(2+).

Its subcellular location is the cytoplasm. It catalyses the reaction Endonucleolytic cleavage at a junction such as a reciprocal single-stranded crossover between two homologous DNA duplexes (Holliday junction).. In terms of biological role, the RuvA-RuvB-RuvC complex processes Holliday junction (HJ) DNA during genetic recombination and DNA repair. Endonuclease that resolves HJ intermediates. Cleaves cruciform DNA by making single-stranded nicks across the HJ at symmetrical positions within the homologous arms, yielding a 5'-phosphate and a 3'-hydroxyl group; requires a central core of homology in the junction. The consensus cleavage sequence is 5'-(A/T)TT(C/G)-3'. Cleavage occurs on the 3'-side of the TT dinucleotide at the point of strand exchange. HJ branch migration catalyzed by RuvA-RuvB allows RuvC to scan DNA until it finds its consensus sequence, where it cleaves and resolves the cruciform DNA. This chain is Crossover junction endodeoxyribonuclease RuvC, found in Synechococcus sp. (strain CC9902).